Reading from the N-terminus, the 130-residue chain is Large ribosomal subunit protein eL32 (130 aa).

This sequence belongs to the eukaryotic ribosomal protein eL32 family.

The protein is Large ribosomal subunit protein eL32 (rpl32e) of Pyrococcus abyssi (strain GE5 / Orsay).